The following is a 274-amino-acid chain: NH(3)-dependent NAD(+) synthetase (274 aa).

ATP is bound at residue 46 to 53 (GISGGQDS). Position 52 (Asp-52) interacts with Mg(2+). Residue Arg-140 participates in deamido-NAD(+) binding. Thr-160 provides a ligand contact to ATP. Glu-165 contacts Mg(2+). Residues Lys-173 and Asp-180 each contribute to the deamido-NAD(+) site. Residues Lys-189 and Thr-211 each coordinate ATP. 260-261 (HK) is a binding site for deamido-NAD(+).

Belongs to the NAD synthetase family. Homodimer.

The catalysed reaction is deamido-NAD(+) + NH4(+) + ATP = AMP + diphosphate + NAD(+) + H(+). The protein operates within cofactor biosynthesis; NAD(+) biosynthesis; NAD(+) from deamido-NAD(+) (ammonia route): step 1/1. In terms of biological role, catalyzes the ATP-dependent amidation of deamido-NAD to form NAD. Uses ammonia as a nitrogen source. This Lactococcus lactis subsp. lactis (strain IL1403) (Streptococcus lactis) protein is NH(3)-dependent NAD(+) synthetase.